A 729-amino-acid chain; its full sequence is MGDYGFGVLVQSNTGNKSAFPVRFHPHLQPPHHHQNATPNPAAFINNNTAANGSSAGSAWLFPAPATHNIQDEILGSEKAKSQQQEQQDPLEKQQLSPSPGQEAGILPETEKAKAEENPGDSSSENSNGKEKLRIESPVLTGFDYQEATGLGTSTQPLTSSASSLTGFSNWSAAIAPSSSTIINEDASFFHQGGVPGASANNGALLFQNFPHHVSPGFGGSFSPQIGPLSQHHPHHPHFQHHHSQHQQQRRSPASPHPPPFTHRSAAFNQLPHLANNLNKPPSPWSSYQSPSPTPSSSWSPGGGGYGGWGASQGRDHRRGLNGGITPLNSISPLKKNFASNHIQLQKYARPSSAFAPKSWMEDSLNRADNIFPFPERPRTFDMHSLESSLIDIMRAENDSIKGRLNYSYPGSDSSLLINARTYGRRRGQSSLFPMEDGFLDDGRGDQPLHSGLGSPHCFTHQNGERVERYSRKVFVGGLPPDIDEDEITASFRRFGPLIVDWPHKAESKSYFPPKGYAFLLFQDESSVQALIDACIEEDGKLYLCVSSPTIKDKPVQIRPWNLSDSDFVMDGSQPLDPRKTIFVGGVPRPLRAVELAMIMDRLYGGVCYAGIDTDPELKYPKGAGRVAFSNQQSYIAAISARFVQLQHGEIDKRVEVKPYVLDDQLCDECQGARCGGKFAPFFCANVTCLQYYCEYCWAAIHSRAGREFHKPLVKEGGDRPRHISFRWN.

Disordered stretches follow at residues 20-50 (FPVR…NNTA) and 78-133 (EKAK…KEKL). Residues 24–35 (FHPHLQPPHHHQ) are compositionally biased toward basic residues. Residues 83–96 (QQQEQQDPLEKQQL) are compositionally biased toward low complexity. Phosphoserine is present on residues Ser97, Ser99, and Ser137. The interval 218–324 (FGGSFSPQIG…RDHRRGLNGG (107 aa)) is disordered. A compositionally biased stretch (basic residues) spans 232 to 249 (HHPHHPHFQHHHSQHQQQ). A phosphoserine mark is found at Ser252 and Ser255. The span at 285-300 (WSSYQSPSPTPSSSWS) shows a compositional bias: low complexity. Gly residues predominate over residues 301–311 (PGGGGYGGWGA). Phosphothreonine is present on Thr326. 2 positions are modified to phosphoserine: Ser330 and Ser332. 2 RRM domains span residues 472-563 (RKVF…PWNL) and 580-662 (KTIF…PYVL). The RNA-binding stretch occupies residues 541–543 (KLY). Zn(2+) contacts are provided by Cys667, Cys675, Cys684, Cys689, Cys694, Cys697, His702, and His710.

This sequence belongs to the RRM CPEB family. As to quaternary structure, interacts with TOB1. In terms of tissue distribution, highly expressed in brain, including hippocampus, amygdala, granule and Purkinje cells of the cerebellum (at protein level). Expressed in spinal cord (at protein level). Expressed in kidney, lung and heart (at protein level). Expressed in liver (at protein level). Expressed in spleen and testis (at protein level). Weakly expressed in ovary and in granular cells of dentate gyrus and the pyramidal cells of CA3 and CA1 of the hippocampus.

It is found in the cytoplasm. The protein resides in the cell projection. Its subcellular location is the dendrite. The protein localises to the dendritic spine. It localises to the postsynaptic density. It is found in the axon. The protein resides in the growth cone. Its subcellular location is the endoplasmic reticulum. The protein localises to the perinuclear region. In terms of biological role, sequence-specific RNA-binding protein that binds to the cytoplasmic polyadenylation element (CPE), an uridine-rich sequence element (consensus sequence 5'-UUUUUAU-3') within the mRNA 3'-UTR. RNA binding results in a clear conformational change analogous to the Venus fly trap mechanism. Regulates activation of unfolded protein response (UPR) in the process of adaptation to ER stress in liver, by maintaining translation of CPE-regulated mRNAs in conditions in which global protein synthesis is inhibited. Required for cell cycle progression, specifically for cytokinesis and chromosomal segregation. Plays a role as an oncogene promoting tumor growth and progression by positively regulating translation of t-plasminogen activator/PLAT. Stimulates proliferation of melanocytes. In contrast to CPEB1 and CPEB3, does not play role in synaptic plasticity, learning and memory. In Mus musculus (Mouse), this protein is Cytoplasmic polyadenylation element-binding protein 4 (Cpeb4).